The following is a 398-amino-acid chain: LL-diaminopimelate aminotransferase (398 aa).

Substrate contacts are provided by Tyr-14 and Gly-41. Residues Tyr-71, 104 to 105 (AK), Tyr-128, Asn-174, Tyr-205, and 233 to 235 (SFS) each bind pyridoxal 5'-phosphate. Substrate-binding residues include Lys-105, Tyr-128, and Asn-174. Lys-236 is subject to N6-(pyridoxal phosphate)lysine. Positions 244 and 275 each coordinate pyridoxal 5'-phosphate. 2 residues coordinate substrate: Asn-275 and Arg-368.

The protein belongs to the class-I pyridoxal-phosphate-dependent aminotransferase family. LL-diaminopimelate aminotransferase subfamily. Homodimer. It depends on pyridoxal 5'-phosphate as a cofactor.

It catalyses the reaction (2S,6S)-2,6-diaminopimelate + 2-oxoglutarate = (S)-2,3,4,5-tetrahydrodipicolinate + L-glutamate + H2O + H(+). It functions in the pathway amino-acid biosynthesis; L-lysine biosynthesis via DAP pathway; LL-2,6-diaminopimelate from (S)-tetrahydrodipicolinate (aminotransferase route): step 1/1. In terms of biological role, involved in the synthesis of meso-diaminopimelate (m-DAP or DL-DAP), required for both lysine and peptidoglycan biosynthesis. Catalyzes the direct conversion of tetrahydrodipicolinate to LL-diaminopimelate. The sequence is that of LL-diaminopimelate aminotransferase from Chlamydia felis (strain Fe/C-56) (Chlamydophila felis).